Consider the following 411-residue polypeptide: MSRSPSLPDRPTLDVDPESTPAERLNALQDHYVDIVAVNGELQAQLDDVEARREELREEVNRLQRENETLKTASLYLATVEDLPEDGSAVIKQHGNNQEVLTELSPRLADTLEVGDRVAINDSFSVQRVLDDETDARAQAMEVDESPSVTYADIGGLDDQLREVREAVEDPLVNPEKFDAVGVEPPSGVLLHGPPGTGKTMLAKAVANQTDASFIKMAGSELVRKFIGEGSRLVRDLFELAEQKDPAIIFIDEIDAVAAKRTDSKTSGDAEVQRTMMQLLSEMDGFDERGDIRIIAATNRFDMLDSAILRPGRFDRLIEVPNPNPDARERILEIHAGEMNVADSVDFSDLAADTAEFSGAQLASLATEAGMFAIRDDRDEVHRQDFDDAYEKLVAEGDTESSGPRYPSYIQ.

Residues 35-75 (IVAVNGELQAQLDDVEARREELREEVNRLQRENETLKTASL) are a coiled coil. ATP contacts are provided by residues 196 to 201 (GTGKTM) and His335. The segment at 408–411 (SYIQ) is docks into pockets in the proteasome alpha-ring to cause gate opening.

This sequence belongs to the AAA ATPase family. In terms of assembly, homohexamer. The hexameric complex has a two-ring architecture resembling a top hat that caps the 20S proteasome core at one or both ends. Upon ATP-binding, the C-terminus of PAN interacts with the alpha-rings of the proteasome core by binding to the intersubunit pockets.

It is found in the cytoplasm. ATPase which is responsible for recognizing, binding, unfolding and translocation of substrate proteins into the archaeal 20S proteasome core particle. Is essential for opening the gate of the 20S proteasome via an interaction with its C-terminus, thereby allowing substrate entry and access to the site of proteolysis. Thus, the C-termini of the proteasomal ATPase function like a 'key in a lock' to induce gate opening and therefore regulate proteolysis. Unfolding activity requires energy from ATP hydrolysis, whereas ATP binding alone promotes ATPase-20S proteasome association which triggers gate opening, and supports translocation of unfolded substrates. In Halobacterium salinarum (strain ATCC 700922 / JCM 11081 / NRC-1) (Halobacterium halobium), this protein is Proteasome-activating nucleotidase 2.